A 243-amino-acid polypeptide reads, in one-letter code: MGQKINPIGFRLGINRTWDSRWFADNAEYGQLLHEDLKMRKFVMSELKQAGISKVVIERPHKKCRVTIHSARPGLIIGRKGADIDKLRKKLSDMTNSETHLNIVEVRKPEVDATLVAQSIAQQLERRVAFRRAMKRAVQSAMRLGAEGIKITCAGRLGGAEIARTEWYREGRVPLHTLRADIDYGTAEAETAFGICGIKVWIFKGEILEHDPMASERRAMEGDAQGPASRDRDRDRDRRRDNA.

The 69-residue stretch at M39–R107 folds into the KH type-2 domain. The disordered stretch occupies residues A214–A243. Residues S229–A243 are compositionally biased toward basic and acidic residues.

Belongs to the universal ribosomal protein uS3 family. In terms of assembly, part of the 30S ribosomal subunit. Forms a tight complex with proteins S10 and S14.

Its function is as follows. Binds the lower part of the 30S subunit head. Binds mRNA in the 70S ribosome, positioning it for translation. The polypeptide is Small ribosomal subunit protein uS3 (Rhizobium leguminosarum bv. trifolii (strain WSM2304)).